We begin with the raw amino-acid sequence, 228 residues long: Phosphatidylserine decarboxylase proenzyme (228 aa).

Ser-197 acts as the Schiff-base intermediate with substrate; via pyruvic acid in catalysis. Position 197 is a pyruvic acid (Ser); by autocatalysis (Ser-197).

The protein belongs to the phosphatidylserine decarboxylase family. PSD-A subfamily. In terms of assembly, heterodimer of a large membrane-associated beta subunit and a small pyruvoyl-containing alpha subunit. It depends on pyruvate as a cofactor. Is synthesized initially as an inactive proenzyme. Formation of the active enzyme involves a self-maturation process in which the active site pyruvoyl group is generated from an internal serine residue via an autocatalytic post-translational modification. Two non-identical subunits are generated from the proenzyme in this reaction, and the pyruvate is formed at the N-terminus of the alpha chain, which is derived from the carboxyl end of the proenzyme. The post-translation cleavage follows an unusual pathway, termed non-hydrolytic serinolysis, in which the side chain hydroxyl group of the serine supplies its oxygen atom to form the C-terminus of the beta chain, while the remainder of the serine residue undergoes an oxidative deamination to produce ammonia and the pyruvoyl prosthetic group on the alpha chain.

The protein localises to the cell membrane. The enzyme catalyses a 1,2-diacyl-sn-glycero-3-phospho-L-serine + H(+) = a 1,2-diacyl-sn-glycero-3-phosphoethanolamine + CO2. It participates in phospholipid metabolism; phosphatidylethanolamine biosynthesis; phosphatidylethanolamine from CDP-diacylglycerol: step 2/2. Catalyzes the formation of phosphatidylethanolamine (PtdEtn) from phosphatidylserine (PtdSer). In Phocaeicola vulgatus (strain ATCC 8482 / DSM 1447 / JCM 5826 / CCUG 4940 / NBRC 14291 / NCTC 11154) (Bacteroides vulgatus), this protein is Phosphatidylserine decarboxylase proenzyme.